Consider the following 189-residue polypeptide: Apolipoprotein D (189 aa).

The signal sequence occupies residues 1–21 (MAPTLLLLLPALAGLISVAQG). Gln-22 carries the pyrrolidone carboxylic acid modification. 2 disulfides stabilise this stretch: Cys-29–Cys-135 and Cys-62–Cys-186. 2 N-linked (GlcNAc...) asparagine glycosylation sites follow: Asn-66 and Asn-99.

Belongs to the calycin superfamily. Lipocalin family. As to quaternary structure, homodimer. Most heavily expressed in adrenal gland, lung, brain, testis and spleen.

The protein resides in the secreted. In terms of biological role, APOD occurs in the macromolecular complex with lecithin-transport and binding of bilin. Appears to be able to transport a variety of ligands in a number of different contexts. This Oryctolagus cuniculus (Rabbit) protein is Apolipoprotein D (APOD).